The following is a 217-amino-acid chain: Large ribosomal subunit protein uL1 (217 aa).

It belongs to the universal ribosomal protein uL1 family.

The polypeptide is Large ribosomal subunit protein uL1 (RpL10A) (Spodoptera frugiperda (Fall armyworm)).